The primary structure comprises 144 residues: Actin-associated protein FAM107A (144 aa).

Positions 67–94 (LQRVLEHRRRNQLIKKKKEELEAKRLQC) form a coiled coil. The Nuclear localization signal motif lies at 74–84 (RRRNQLIKKKK). Residues 105 to 124 (QRLNQLEKPPEKEEDHAPEF) are disordered. Over residues 112–124 (KPPEKEEDHAPEF) the composition is skewed to basic and acidic residues.

It belongs to the FAM107 family. Interacts with ACTB. Interacts with COMMD1; this interaction stabilizes COMMD1 in the nucleus. Interacts with MAP1A. Interacts with PRDX1. Interacts with F-actin.

Its subcellular location is the nucleus. The protein resides in the cytoplasm. It is found in the cytoskeleton. It localises to the stress fiber. The protein localises to the cell junction. Its subcellular location is the focal adhesion. The protein resides in the cell projection. It is found in the ruffle membrane. It localises to the synapse. Its function is as follows. Stress-inducible actin-binding protein that plays a role in synaptic and cognitive functions by modulating actin filamentous (F-actin) dynamics. Mediates polymerization of globular actin to F-actin. Also binds to, stabilizes and bundles F-actin. Involved in synaptic function by regulating neurite outgrowth in an actin-dependent manner and for the acquisition of hippocampus-dependent cognitive function, such as learning and long-term memory. Plays a role in the actin and microtubule cytoskeleton organization; negatively regulates focal adhesion (FA) assembly promoting malignant glial cell migration in an actin-, microtubule- and MAP1A-dependent manner. Also involved in neuroblastoma G1/S phase cell cycle progression and cell proliferation inhibition by stimulating ubiquitination of NF-kappa-B subunit RELA and NF-kappa-B degradation in a COMMD1- and actin-dependent manner. May play a role in tumor development. In Pan troglodytes (Chimpanzee), this protein is Actin-associated protein FAM107A (FAM107A).